The following is a 225-amino-acid chain: uncharacterized protein (225 aa).

This is an uncharacterized protein from Arabidopsis thaliana (Mouse-ear cress).